The primary structure comprises 854 residues: Translation initiation factor IF-2 (854 aa).

Disordered stretches follow at residues 52 to 79 (RQHG…RDGG) and 128 to 265 (RKQE…HGFQ). Over residues 61 to 75 (SQRITLQRKTTSTLS) the composition is skewed to polar residues. Composition is skewed to basic and acidic residues over residues 128–150 (RKQE…RQEA) and 211–232 (VRHD…DNKR). A compositionally biased stretch (basic residues) spans 247–257 (RGKLGRKNKKP). The tr-type G domain occupies 354–523 (KRAPVVTVMG…LLQAEVLELT (170 aa)). Residues 363 to 370 (GHVDHGKT) are G1. Position 363–370 (363–370 (GHVDHGKT)) interacts with GTP. Residues 388 to 392 (GITQH) are G2. Residues 409 to 412 (DTPG) form a G3 region. Residue 409–413 (DTPGH) participates in GTP binding. The interval 463 to 466 (TKID) is G4. Residues 499–501 (SAK) form a G5 region.

This sequence belongs to the TRAFAC class translation factor GTPase superfamily. Classic translation factor GTPase family. IF-2 subfamily.

It localises to the cytoplasm. One of the essential components for the initiation of protein synthesis. Protects formylmethionyl-tRNA from spontaneous hydrolysis and promotes its binding to the 30S ribosomal subunits. Also involved in the hydrolysis of GTP during the formation of the 70S ribosomal complex. This chain is Translation initiation factor IF-2, found in Marinomonas sp. (strain MWYL1).